Consider the following 451-residue polypeptide: Chromosomal replication initiator protein DnaA (451 aa).

A domain I, interacts with DnaA modulators region spans residues 1–71 (MSEKEIWDKV…QAIIYDVIGY (71 aa)). The interval 71-112 (YEVKPHFISEDELASYNNVNTQEVQEPQVQHSSIDDKTWGKE) is domain II. The tract at residues 113 to 329 (QFNMHNTFDT…GALTRLLAYS (217 aa)) is domain III, AAA+ region. Gly157, Gly159, Lys160, and Thr161 together coordinate ATP. The segment at 330–451 (KLQGKPITTE…ENLEKEIRNQ (122 aa)) is domain IV, binds dsDNA.

Belongs to the DnaA family. In terms of assembly, oligomerizes as a right-handed, spiral filament on DNA at oriC.

The protein localises to the cytoplasm. Its function is as follows. Plays an essential role in the initiation and regulation of chromosomal replication. ATP-DnaA binds to the origin of replication (oriC) to initiate formation of the DNA replication initiation complex once per cell cycle. Binds the DnaA box (a 9 base pair repeat at the origin) and separates the double-stranded (ds)DNA. Forms a right-handed helical filament on oriC DNA; dsDNA binds to the exterior of the filament while single-stranded (ss)DNA is stabiized in the filament's interior. The ATP-DnaA-oriC complex binds and stabilizes one strand of the AT-rich DNA unwinding element (DUE), permitting loading of DNA polymerase. After initiation quickly degrades to an ADP-DnaA complex that is not apt for DNA replication. Binds acidic phospholipids. The sequence is that of Chromosomal replication initiator protein DnaA from Staphylococcus epidermidis (strain ATCC 35984 / DSM 28319 / BCRC 17069 / CCUG 31568 / BM 3577 / RP62A).